The primary structure comprises 614 residues: UvrABC system protein C (614 aa).

Positions 26-104 (NLPGVYKMLG…IKEYRPPYNV (79 aa)) constitute a GIY-YIG domain. The region spanning 215-250 (SDIHTALIEKMEASAEELDFEKAVFYRDQLSMLREV) is the UVR domain.

This sequence belongs to the UvrC family. In terms of assembly, interacts with UvrB in an incision complex.

The protein resides in the cytoplasm. In terms of biological role, the UvrABC repair system catalyzes the recognition and processing of DNA lesions. UvrC both incises the 5' and 3' sides of the lesion. The N-terminal half is responsible for the 3' incision and the C-terminal half is responsible for the 5' incision. The sequence is that of UvrABC system protein C from Psychrobacter cryohalolentis (strain ATCC BAA-1226 / DSM 17306 / VKM B-2378 / K5).